The chain runs to 374 residues: Phosphatidylglycerol--prolipoprotein diacylglyceryl transferase (374 aa).

4 helical membrane passes run 33 to 53 (ICFI…IALF), 155 to 175 (LCWF…VFFY), 195 to 215 (LASH…TSYI), and 222 to 242 (LSFL…AVFI). Arg243 is an a 1,2-diacyl-sn-glycero-3-phospho-(1'-sn-glycerol) binding site. The next 3 helical transmembrane spans lie at 279–299 (PVQL…FTLW), 306–326 (LAAG…RFLL), and 341–361 (ILQM…CLVW).

This sequence belongs to the Lgt family.

The protein resides in the cell inner membrane. The enzyme catalyses L-cysteinyl-[prolipoprotein] + a 1,2-diacyl-sn-glycero-3-phospho-(1'-sn-glycerol) = an S-1,2-diacyl-sn-glyceryl-L-cysteinyl-[prolipoprotein] + sn-glycerol 1-phosphate + H(+). It participates in protein modification; lipoprotein biosynthesis (diacylglyceryl transfer). Catalyzes the transfer of the diacylglyceryl group from phosphatidylglycerol to the sulfhydryl group of the N-terminal cysteine of a prolipoprotein, the first step in the formation of mature lipoproteins. This Protochlamydia amoebophila (strain UWE25) protein is Phosphatidylglycerol--prolipoprotein diacylglyceryl transferase.